The primary structure comprises 76 residues: Conotoxin Vc6.9 (76 aa).

The signal sequence occupies residues 1–19; sequence MEKLTILLLVAAVLMSTQA. Positions 20-41 are excised as a propeptide; it reads LMQEQRQKAKINLFSKRKPSAE. 3 disulfide bridges follow: Cys49–Cys63, Cys56–Cys67, and Cys62–Cys72.

This sequence belongs to the conotoxin O2 superfamily. As to expression, expressed by the venom duct.

The protein localises to the secreted. Functionally, inhibits voltage-gated ion channels. The polypeptide is Conotoxin Vc6.9 (Conus victoriae (Queen Victoria cone)).